The chain runs to 446 residues: F-box/LRR-repeat protein At4g29420 (446 aa).

Positions 1–51 (MDELPPELWIKILSRINDSESLARCRVASKTLNSLSREVRAVNLICTWSRY) constitute an F-box domain. 8 LRR repeats span residues 59 to 84 (VVTP…SVGV), 103 to 130 (DLYL…SISD), 135 to 160 (SCWR…EVKN), 181 to 206 (FIRL…NLIG), 223 to 248 (CHWT…KLKC), 265 to 289 (HLSV…ELVS), 318 to 343 (QSER…SLSP), and 382 to 407 (NVHQ…RLMI).

In Arabidopsis thaliana (Mouse-ear cress), this protein is F-box/LRR-repeat protein At4g29420.